Here is an 85-residue protein sequence, read N- to C-terminus: Hepcidin (85 aa).

Positions 1-24 (MKTFSVAVAVAVVLAFICLQESSA) are cleaved as a signal peptide. Residues 25–64 (VPANEEQELEQQIYFADPEMPVESCKMPYYMRENRQGSPA) constitute a propeptide that is removed on maturation. 4 disulfide bridges follow: Cys66–Cys83, Cys69–Cys72, Cys70–Cys79, and Cys73–Cys82.

Monomer. As to expression, expressed in all tissues tested, with highest levels of expression in kidney and lowest levels in liver. Intra-peritoneal injection of lipopolysaccharide results in increased expression in heart, spleen and stomach, but not in kidney or liver.

Its subcellular location is the secreted. Its function is as follows. Seems to act as a signaling molecule involved in the maintenance of iron homeostasis. Seems to be required in conjunction with HFE to regulate both intestinal iron absorption and iron storage in macrophages. In terms of biological role, has very strong antibacterial activity against the marine Gram-negative bacteria V.alginolyticus (MIC=24 uM), V.fluvialis, V.harveyis (MIC=12 uM) and V.parahaemolyticus (MIC=6 uM). Has antibacterial activity against the Gram-negative bacteria A.hydrophila (MIC=6 uM), E.coli (MIC=24 uM), and E.coli BL21(DE3)plysS (MIC=6 uM), and the Gram-positive bacteria B.cereus (MIC=24 uM), B.subtilis (MIC=6 uM), C.glutamicum (MIC=3 uM), M.luteus (MIC=3 uM), M.lysodeikticus, S.aureus (MIC=6 uM) and S.epidermis (MIC=12 uM). Possesses antifungal activity against A.niger (MIC=24 uM), F.graminearum (MIC24 uM) and F.solani (MIC=24 uM), but lacks antifungal activity against the yeasts P.pastoris GS115 and C.albicans. This Larimichthys crocea (Large yellow croaker) protein is Hepcidin.